A 466-amino-acid chain; its full sequence is Ribulose bisphosphate carboxylase large chain (466 aa).

An N6,N6,N6-trimethyllysine modification is found at Lys4. Substrate is bound by residues Asn113 and Thr163. Lys165 serves as the catalytic Proton acceptor. Lys167 provides a ligand contact to substrate. Residues Lys191, Asp193, and Glu194 each contribute to the Mg(2+) site. Lys191 carries the post-translational modification N6-carboxylysine. The active-site Proton acceptor is the His284. The substrate site is built by Arg285, His317, and Ser369.

Belongs to the RuBisCO large chain family. Type I subfamily. In terms of assembly, heterohexadecamer of 8 large chains and 8 small chains; disulfide-linked. The disulfide link is formed within the large subunit homodimers. It depends on Mg(2+) as a cofactor. The disulfide bond which can form in the large chain dimeric partners within the hexadecamer appears to be associated with oxidative stress and protein turnover.

It is found in the plastid. It localises to the chloroplast. The enzyme catalyses 2 (2R)-3-phosphoglycerate + 2 H(+) = D-ribulose 1,5-bisphosphate + CO2 + H2O. It catalyses the reaction D-ribulose 1,5-bisphosphate + O2 = 2-phosphoglycolate + (2R)-3-phosphoglycerate + 2 H(+). Functionally, ruBisCO catalyzes two reactions: the carboxylation of D-ribulose 1,5-bisphosphate, the primary event in carbon dioxide fixation, as well as the oxidative fragmentation of the pentose substrate in the photorespiration process. Both reactions occur simultaneously and in competition at the same active site. The polypeptide is Ribulose bisphosphate carboxylase large chain (Ruttya fruticosa (African azalea)).